We begin with the raw amino-acid sequence, 332 residues long: tRNA U34 carboxymethyltransferase (332 aa).

Carboxy-S-adenosyl-L-methionine-binding positions include Lys91, Trp105, Lys110, Gly130, 152–154, 181–182, Met196, Tyr200, and Arg315; these read DPS and IE.

It belongs to the class I-like SAM-binding methyltransferase superfamily. CmoB family. In terms of assembly, homotetramer.

The catalysed reaction is carboxy-S-adenosyl-L-methionine + 5-hydroxyuridine(34) in tRNA = 5-carboxymethoxyuridine(34) in tRNA + S-adenosyl-L-homocysteine + H(+). Functionally, catalyzes carboxymethyl transfer from carboxy-S-adenosyl-L-methionine (Cx-SAM) to 5-hydroxyuridine (ho5U) to form 5-carboxymethoxyuridine (cmo5U) at position 34 in tRNAs. This is tRNA U34 carboxymethyltransferase from Shewanella sp. (strain W3-18-1).